A 274-amino-acid polypeptide reads, in one-letter code: Diaminopimelate epimerase (274 aa).

Substrate-binding residues include asparagine 11 and asparagine 62. The active-site Proton donor is cysteine 71. Substrate is bound by residues 72-73 (GN), asparagine 157, asparagine 190, and 208-209 (ER). Cysteine 217 acts as the Proton acceptor in catalysis. Position 218–219 (218–219 (GT)) interacts with substrate.

Belongs to the diaminopimelate epimerase family. Homodimer.

The protein localises to the cytoplasm. The catalysed reaction is (2S,6S)-2,6-diaminopimelate = meso-2,6-diaminopimelate. It functions in the pathway amino-acid biosynthesis; L-lysine biosynthesis via DAP pathway; DL-2,6-diaminopimelate from LL-2,6-diaminopimelate: step 1/1. Functionally, catalyzes the stereoinversion of LL-2,6-diaminopimelate (L,L-DAP) to meso-diaminopimelate (meso-DAP), a precursor of L-lysine and an essential component of the bacterial peptidoglycan. The sequence is that of Diaminopimelate epimerase from Elusimicrobium minutum (strain Pei191).